The chain runs to 929 residues: Chitin synthase 1 (929 aa).

A compositionally biased stretch (gly residues) spans 1–12 (MAYRGAGGPGGG). 2 disordered regions span residues 1–43 (MAYR…QEDE) and 114–156 (MGGH…GGGL). 2 stretches are compositionally biased toward polar residues: residues 21–33 (QDLN…SNVQ) and 140–149 (SWVQRQNPNA). Asparagine 560 carries N-linked (GlcNAc...) asparagine glycosylation. Helical transmembrane passes span 587–607 (FFFH…WFSL), 643–663 (LFNA…FILA), 678–698 (SFFV…YLVV), 730–750 (VILL…FMYL), and 758–778 (SFPY…VYAF). N-linked (GlcNAc...) asparagine glycosylation is present at asparagine 801. A run of 2 helical transmembrane segments spans residues 857–877 (TMLV…ITSD) and 897–917 (FLLF…LWFL).

It belongs to the chitin synthase family. Class III subfamily.

It is found in the cell membrane. It carries out the reaction [(1-&gt;4)-N-acetyl-beta-D-glucosaminyl](n) + UDP-N-acetyl-alpha-D-glucosamine = [(1-&gt;4)-N-acetyl-beta-D-glucosaminyl](n+1) + UDP + H(+). Functionally, polymerizes chitin, a structural polymer of the cell wall and septum, by transferring the sugar moiety of UDP-GlcNAc to the non-reducing end of the growing chitin polymer. CHS1 and CHS3 have compensatory functions in cell wall modifications in responses to stresses. Involved in appressoria formation and required for full virulence. The polypeptide is Chitin synthase 1 (Pyricularia oryzae (strain 70-15 / ATCC MYA-4617 / FGSC 8958) (Rice blast fungus)).